The sequence spans 181 residues: Small ribosomal subunit protein uS4 (181 aa).

One can recognise an S4 RNA-binding domain in the interval 108–180 (RRLQTIVYRK…GERQRIMNQR (73 aa)).

This sequence belongs to the universal ribosomal protein uS4 family. As to quaternary structure, part of the 30S ribosomal subunit. Contacts protein S5. The interaction surface between S4 and S5 is involved in control of translational fidelity.

Functionally, one of the primary rRNA binding proteins, it binds directly to 16S rRNA where it nucleates assembly of the body of the 30S subunit. Its function is as follows. With S5 and S12 plays an important role in translational accuracy. The protein is Small ribosomal subunit protein uS4 of Methanocorpusculum labreanum (strain ATCC 43576 / DSM 4855 / Z).